Here is a 53-residue protein sequence, read N- to C-terminus: Antilisterial bacteriocin subtilosin biosynthesis protein AlbB (53 aa).

A run of 2 helical transmembrane segments spans residues 8-28 (ILLY…FVKS) and 30-50 (YLFT…ARKA).

It is found in the cell membrane. Its function is as follows. Involved in the production of the bacteriocin subtilosin. Required for maximal production and for optimal immunity to subtilosin. The sequence is that of Antilisterial bacteriocin subtilosin biosynthesis protein AlbB (albB) from Bacillus subtilis (strain 168).